We begin with the raw amino-acid sequence, 454 residues long: Bifunctional protein GlmU (454 aa).

Residues 1 to 233 form a pyrophosphorylase region; the sequence is MQATPRPLAL…EAETIGINSR (233 aa). Residues 13–16, K27, Q80, 85–86, 108–110, G145, E159, N174, and N231 contribute to the UDP-N-acetyl-alpha-D-glucosamine site; these read LAAG, GT, and YGD. Residue D110 participates in Mg(2+) binding. N231 is a Mg(2+) binding site. The linker stretch occupies residues 234 to 254; that stretch reads AELVRAEAQFQSQRRAALIEA. The interval 255-454 is N-acetyltransferase; that stretch reads GVTMQAPDSV…KAIKDAKSKD (200 aa). UDP-N-acetyl-alpha-D-glucosamine-binding residues include R320 and K338. Catalysis depends on H350, which acts as the Proton acceptor. Residues Y353 and N364 each coordinate UDP-N-acetyl-alpha-D-glucosamine. Acetyl-CoA-binding positions include A367, 373-374, S392, S410, and R427; that span reads NY.

The protein in the N-terminal section; belongs to the N-acetylglucosamine-1-phosphate uridyltransferase family. It in the C-terminal section; belongs to the transferase hexapeptide repeat family. Homotrimer. Requires Mg(2+) as cofactor.

It is found in the cytoplasm. It catalyses the reaction alpha-D-glucosamine 1-phosphate + acetyl-CoA = N-acetyl-alpha-D-glucosamine 1-phosphate + CoA + H(+). It carries out the reaction N-acetyl-alpha-D-glucosamine 1-phosphate + UTP + H(+) = UDP-N-acetyl-alpha-D-glucosamine + diphosphate. The protein operates within nucleotide-sugar biosynthesis; UDP-N-acetyl-alpha-D-glucosamine biosynthesis; N-acetyl-alpha-D-glucosamine 1-phosphate from alpha-D-glucosamine 6-phosphate (route II): step 2/2. It participates in nucleotide-sugar biosynthesis; UDP-N-acetyl-alpha-D-glucosamine biosynthesis; UDP-N-acetyl-alpha-D-glucosamine from N-acetyl-alpha-D-glucosamine 1-phosphate: step 1/1. Its pathway is bacterial outer membrane biogenesis; LPS lipid A biosynthesis. Catalyzes the last two sequential reactions in the de novo biosynthetic pathway for UDP-N-acetylglucosamine (UDP-GlcNAc). The C-terminal domain catalyzes the transfer of acetyl group from acetyl coenzyme A to glucosamine-1-phosphate (GlcN-1-P) to produce N-acetylglucosamine-1-phosphate (GlcNAc-1-P), which is converted into UDP-GlcNAc by the transfer of uridine 5-monophosphate (from uridine 5-triphosphate), a reaction catalyzed by the N-terminal domain. The protein is Bifunctional protein GlmU of Jannaschia sp. (strain CCS1).